A 138-amino-acid polypeptide reads, in one-letter code: Large ribosomal subunit protein uL16c (138 aa).

This sequence belongs to the universal ribosomal protein uL16 family. As to quaternary structure, part of the 50S ribosomal subunit.

It localises to the plastid. The protein localises to the chloroplast. This is Large ribosomal subunit protein uL16c from Tetradesmus obliquus (Green alga).